Reading from the N-terminus, the 993-residue chain is Chromosome transmission fidelity protein 18 homolog (993 aa).

The tract at residues 26–72 is disordered; the sequence is PDEFNAYDGPSTSKQAAEKQKENRAPVAALRDSTRLGNSTLGSPQLS. Over residues 60–72 the composition is skewed to polar residues; it reads RLGNSTLGSPQLS. An ATP-binding site is contributed by 427 to 434; sequence GPPGLGKT. Positions 892-913 are disordered; it reads AAPKGGAPSAPAAKKKTSGAAA. Over residues 894-913 the composition is skewed to low complexity; sequence PKGGAPSAPAAKKKTSGAAA.

Belongs to the activator 1 small subunits family. CTF18 subfamily. As to quaternary structure, component of the CTF18-RFC complex.

It localises to the nucleus. Functionally, chromosome cohesion factor involved in sister chromatid cohesion and fidelity of chromosome transmission. Component of one of the cell nuclear antigen loader complexes, CTF18-replication factor C (CTF18-RFC). The CTF18-RFC complex catalyzes the ATP-dependent loading of PCNA onto primed and gapped DNA and has weak ATPase activity. The CTF18-RFC complex catalyzes the ATP-dependent loading of PCNA onto primed and gapped DNA. The polypeptide is Chromosome transmission fidelity protein 18 homolog (Drosophila melanogaster (Fruit fly)).